The sequence spans 315 residues: Thymidylate synthase (315 aa).

DUMP is bound by residues Arg22 and 177-178 (RR). Cys197 (nucleophile) is an active-site residue. Residues 217 to 220 (RSAD), Asn228, and 258 to 260 (HLY) contribute to the dUMP site. Asp220 contacts (6R)-5,10-methylene-5,6,7,8-tetrahydrofolate. A (6R)-5,10-methylene-5,6,7,8-tetrahydrofolate-binding site is contributed by Ala314.

The protein belongs to the thymidylate synthase family. Bacterial-type ThyA subfamily. In terms of assembly, homodimer.

It localises to the cytoplasm. It carries out the reaction dUMP + (6R)-5,10-methylene-5,6,7,8-tetrahydrofolate = 7,8-dihydrofolate + dTMP. It participates in pyrimidine metabolism; dTTP biosynthesis. Its function is as follows. Catalyzes the reductive methylation of 2'-deoxyuridine-5'-monophosphate (dUMP) to 2'-deoxythymidine-5'-monophosphate (dTMP) while utilizing 5,10-methylenetetrahydrofolate (mTHF) as the methyl donor and reductant in the reaction, yielding dihydrofolate (DHF) as a by-product. This enzymatic reaction provides an intracellular de novo source of dTMP, an essential precursor for DNA biosynthesis. The polypeptide is Thymidylate synthase (Enterococcus faecalis (strain ATCC 700802 / V583)).